A 114-amino-acid chain; its full sequence is Ribonuclease P protein component (114 aa).

Belongs to the RnpA family. In terms of assembly, consists of a catalytic RNA component (M1 or rnpB) and a protein subunit.

The catalysed reaction is Endonucleolytic cleavage of RNA, removing 5'-extranucleotides from tRNA precursor.. In terms of biological role, RNaseP catalyzes the removal of the 5'-leader sequence from pre-tRNA to produce the mature 5'-terminus. It can also cleave other RNA substrates such as 4.5S RNA. The protein component plays an auxiliary but essential role in vivo by binding to the 5'-leader sequence and broadening the substrate specificity of the ribozyme. The sequence is that of Ribonuclease P protein component from Staphylococcus haemolyticus (strain JCSC1435).